The sequence spans 376 residues: tRNA-specific 2-thiouridylase MnmA (376 aa).

Residues 19 to 26 (GMSGGVDS) and Met45 each bind ATP. The tract at residues 105–107 (NPD) is interaction with target base in tRNA. Catalysis depends on Cys110, which acts as the Nucleophile. Cysteines 110 and 210 form a disulfide. Gly134 lines the ATP pocket. Positions 160–162 (KDQ) are interaction with tRNA. Residue Cys210 is the Cysteine persulfide intermediate of the active site. The interaction with tRNA stretch occupies residues 326–327 (RY).

The protein belongs to the MnmA/TRMU family.

It is found in the cytoplasm. The enzyme catalyses S-sulfanyl-L-cysteinyl-[protein] + uridine(34) in tRNA + AH2 + ATP = 2-thiouridine(34) in tRNA + L-cysteinyl-[protein] + A + AMP + diphosphate + H(+). Its function is as follows. Catalyzes the 2-thiolation of uridine at the wobble position (U34) of tRNA, leading to the formation of s(2)U34. The protein is tRNA-specific 2-thiouridylase MnmA of Bordetella petrii (strain ATCC BAA-461 / DSM 12804 / CCUG 43448).